We begin with the raw amino-acid sequence, 451 residues long: Phosphoglucosamine mutase (451 aa).

S107 acts as the Phosphoserine intermediate in catalysis. The Mg(2+) site is built by S107, D246, D248, and D250. At S107 the chain carries Phosphoserine.

It belongs to the phosphohexose mutase family. Mg(2+) is required as a cofactor. Activated by phosphorylation.

The catalysed reaction is alpha-D-glucosamine 1-phosphate = D-glucosamine 6-phosphate. In terms of biological role, catalyzes the conversion of glucosamine-6-phosphate to glucosamine-1-phosphate. The protein is Phosphoglucosamine mutase of Burkholderia cenocepacia (strain ATCC BAA-245 / DSM 16553 / LMG 16656 / NCTC 13227 / J2315 / CF5610) (Burkholderia cepacia (strain J2315)).